A 410-amino-acid chain; its full sequence is Cytochrome P450 105A3 (410 aa).

Cysteine 359 provides a ligand contact to heme.

Belongs to the cytochrome P450 family. Monomer. Heme serves as cofactor.

In terms of biological role, catalyzes the hydroxylation of sodium ML-236B carboxylate to pravastatin. The chain is Cytochrome P450 105A3 (cyp105A3) from Streptomyces carbophilus.